An 809-amino-acid chain; its full sequence is Penicillin-binding protein 1A (809 aa).

Residues 1–34 (MSDNTKTNSRNKSVKRTKKVKKKKKFGFFKKLFT) are Cytoplasmic-facing. A helical; Signal-anchor for type II membrane protein membrane pass occupies residues 35–55 (ILFCLFILLSVAASGVIFAIV). Residues 56–809 (KTSPNLDING…PNNNTTNTNK (754 aa)) lie on the Extracellular side of the membrane. The segment at 74-251 (SQLYDDNNNP…PSAYYPFSQN (178 aa)) is transglycosylase. Glu-113 serves as the catalytic Proton donor; for transglycosylase activity. Residues 381–664 (AAATLFDYHT…VAEIWGEIMK (284 aa)) are transpeptidase. Ser-422 acts as the Acyl-ester intermediate; for transpeptidase activity in catalysis. Residues 694-809 (SPSNLSGDDS…PNNNTTNTNK (116 aa)) are disordered.

This sequence in the N-terminal section; belongs to the glycosyltransferase 51 family. It in the C-terminal section; belongs to the transpeptidase family.

It is found in the cell membrane. The enzyme catalyses [GlcNAc-(1-&gt;4)-Mur2Ac(oyl-L-Ala-gamma-D-Glu-L-Lys-D-Ala-D-Ala)](n)-di-trans,octa-cis-undecaprenyl diphosphate + beta-D-GlcNAc-(1-&gt;4)-Mur2Ac(oyl-L-Ala-gamma-D-Glu-L-Lys-D-Ala-D-Ala)-di-trans,octa-cis-undecaprenyl diphosphate = [GlcNAc-(1-&gt;4)-Mur2Ac(oyl-L-Ala-gamma-D-Glu-L-Lys-D-Ala-D-Ala)](n+1)-di-trans,octa-cis-undecaprenyl diphosphate + di-trans,octa-cis-undecaprenyl diphosphate + H(+). It carries out the reaction Preferential cleavage: (Ac)2-L-Lys-D-Ala-|-D-Ala. Also transpeptidation of peptidyl-alanyl moieties that are N-acyl substituents of D-alanine.. It participates in cell wall biogenesis; peptidoglycan biosynthesis. Cell wall formation. Synthesis of cross-linked peptidoglycan from the lipid intermediates. The enzyme has a penicillin-insensitive transglycosylase N-terminal domain (formation of linear glycan strands) and a penicillin-sensitive transpeptidase C-terminal domain (cross-linking of the peptide subunits). The protein is Penicillin-binding protein 1A (pbpA) of Clostridium acetobutylicum (strain ATCC 824 / DSM 792 / JCM 1419 / IAM 19013 / LMG 5710 / NBRC 13948 / NRRL B-527 / VKM B-1787 / 2291 / W).